The chain runs to 453 residues: Probable glucan endo-1,3-beta-glucosidase eglC (453 aa).

An N-terminal signal peptide occupies residues 1-18; it reads MQTRQLLALALAVAATEA. Glu-128 (proton donor) is an active-site residue. A glycan (N-linked (GlcNAc...) asparagine) is linked at Asn-183. Catalysis depends on Glu-239, which acts as the Nucleophile. 3 N-linked (GlcNAc...) asparagine glycosylation sites follow: Asn-364, Asn-368, and Asn-376. The segment covering 370 to 380 has biased composition (polar residues); sequence TYPGSWNSTRP. The tract at residues 370-423 is disordered; it reads TYPGSWNSTRPGANGGSSGSSGSSGSSGSSGSSGSSGSGASGHSSSTGSSSFPS. Low complexity-rich tracts occupy residues 389–402 and 410–423; these read SSGS…SGSS and SGHS…SFPS. A lipid anchor (GPI-anchor amidated asparagine) is attached at Asn-430. A propeptide spans 431-453 (removed in mature form); sequence SASGLSGSLFGAVAAVFVALAAL.

Belongs to the glycosyl hydrolase 17 family. In terms of processing, the GPI-anchor is attached to the protein in the endoplasmic reticulum and serves to target the protein to the cell surface. There, the glucosamine-inositol phospholipid moiety is cleaved off and the GPI-modified mannoprotein is covalently attached via its lipidless GPI glycan remnant to the 1,6-beta-glucan of the outer cell wall layer.

The protein localises to the cell membrane. It localises to the secreted. It is found in the cell wall. The enzyme catalyses Hydrolysis of (1-&gt;3)-beta-D-glucosidic linkages in (1-&gt;3)-beta-D-glucans.. Its function is as follows. Glucanases play a role in cell expansion during growth, in cell-cell fusion during mating, and in spore release during sporulation. This enzyme may be involved in beta-glucan degradation and also function biosynthetically as a transglycosylase. This Aspergillus clavatus (strain ATCC 1007 / CBS 513.65 / DSM 816 / NCTC 3887 / NRRL 1 / QM 1276 / 107) protein is Probable glucan endo-1,3-beta-glucosidase eglC (eglC).